The primary structure comprises 239 residues: Large ribosomal subunit protein uL2 (239 aa).

2 disordered regions span residues 1 to 20 (MGKSLIQQRRGKGSPTFRSP) and 203 to 239 (PFGGKEHHPGKPTTTSRRAPPGRKVGHIAARRTGRRK). Basic residues predominate over residues 222-239 (PPGRKVGHIAARRTGRRK).

The protein belongs to the universal ribosomal protein uL2 family. In terms of assembly, part of the 50S ribosomal subunit. Forms a bridge to the 30S subunit in the 70S ribosome.

In terms of biological role, one of the primary rRNA binding proteins. Required for association of the 30S and 50S subunits to form the 70S ribosome, for tRNA binding and peptide bond formation. It has been suggested to have peptidyltransferase activity; this is somewhat controversial. Makes several contacts with the 16S rRNA in the 70S ribosome. This is Large ribosomal subunit protein uL2 from Pyrococcus horikoshii (strain ATCC 700860 / DSM 12428 / JCM 9974 / NBRC 100139 / OT-3).